The primary structure comprises 335 residues: Phosphate acyltransferase (335 aa).

This sequence belongs to the PlsX family. Homodimer. Probably interacts with PlsY.

It localises to the cytoplasm. The enzyme catalyses a fatty acyl-[ACP] + phosphate = an acyl phosphate + holo-[ACP]. Its pathway is lipid metabolism; phospholipid metabolism. Catalyzes the reversible formation of acyl-phosphate (acyl-PO(4)) from acyl-[acyl-carrier-protein] (acyl-ACP). This enzyme utilizes acyl-ACP as fatty acyl donor, but not acyl-CoA. This Desulforudis audaxviator (strain MP104C) protein is Phosphate acyltransferase.